The following is a 291-amino-acid chain: Phosphate import ATP-binding protein PstB (291 aa).

The ABC transporter domain maps to 45–286; it reads YSTQNLDLWY…PADKQTEDYI (242 aa). 77–84 is an ATP binding site; sequence GPSGCGKS.

The protein belongs to the ABC transporter superfamily. Phosphate importer (TC 3.A.1.7) family. The complex is composed of two ATP-binding proteins (PstB), two transmembrane proteins (PstC and PstA) and a solute-binding protein (PstS).

The protein resides in the cell membrane. The enzyme catalyses phosphate(out) + ATP + H2O = ADP + 2 phosphate(in) + H(+). Part of the ABC transporter complex PstSACB involved in phosphate import. Responsible for energy coupling to the transport system. In Staphylococcus epidermidis (strain ATCC 35984 / DSM 28319 / BCRC 17069 / CCUG 31568 / BM 3577 / RP62A), this protein is Phosphate import ATP-binding protein PstB.